Consider the following 217-residue polypeptide: Nucleoside diphosphate kinase homolog 5 (217 aa).

The segment at 18 to 151 (ERTLALIKPD…REIRFMFPHS (134 aa)) is NDK.

This sequence belongs to the NDK family.

It localises to the cell projection. Its subcellular location is the cilium. In terms of biological role, functions as part of axonemal radial spoke complexes that play an important part in the motility of sperm and cilia. Does not seem to have nucleoside diphosphate kinase (NDPK) activity. Exhibits a 3'-5' exonuclease activity with a preference for single-stranded DNA, suggesting roles in DNA proofreading and repair. This is Nucleoside diphosphate kinase homolog 5 (nme5) from Danio rerio (Zebrafish).